Reading from the N-terminus, the 175-residue chain is CDP-archaeol synthase (175 aa).

4 consecutive transmembrane segments (helical) span residues 41–61 (GFFV…QLLE), 82–102 (TILI…MSFF), 122–142 (FVLG…AEQF), and 147–167 (IAVI…VGYF).

This sequence belongs to the CDP-archaeol synthase family. Requires Mg(2+) as cofactor.

It localises to the cell membrane. The catalysed reaction is 2,3-bis-O-(geranylgeranyl)-sn-glycerol 1-phosphate + CTP + H(+) = CDP-2,3-bis-O-(geranylgeranyl)-sn-glycerol + diphosphate. It functions in the pathway membrane lipid metabolism; glycerophospholipid metabolism. Its function is as follows. Catalyzes the formation of CDP-2,3-bis-(O-geranylgeranyl)-sn-glycerol (CDP-archaeol) from 2,3-bis-(O-geranylgeranyl)-sn-glycerol 1-phosphate (DGGGP) and CTP. This reaction is the third ether-bond-formation step in the biosynthesis of archaeal membrane lipids. The protein is CDP-archaeol synthase of Methanococcoides burtonii (strain DSM 6242 / NBRC 107633 / OCM 468 / ACE-M).